A 167-amino-acid polypeptide reads, in one-letter code: Myelin basic protein (167 aa).

An N-acetylalanine modification is found at A1. A phosphoserine mark is found at S7 and S12. Position 14 is a phosphotyrosine (Y14). T17 is subject to Phosphothreonine. Residue S19 is modified to Phosphoserine. T20 bears the Phosphothreonine mark. Citrulline is present on residues R25 and R31. At T35 the chain carries Phosphothreonine. Position 40 is a phosphoserine (S40). An omega-N-methylarginine mark is found at R43 and R49. The interval 45 to 87 (FGSDRAAPKRGSGKDSHHAARTTHYGSLPQKSQRSQDENPVVH) is induces experimental autoimmune encephalomyelitis (EAE) 1. Residues 46 to 114 (GSDRAAPKRG…GRGLSLSRFS (69 aa)) form a disordered region. At S56 the chain carries Phosphoserine. T67 carries the post-translational modification Phosphothreonine. Position 69 is a phosphotyrosine (Y69). S76 is modified (phosphoserine). Phosphothreonine occurs at positions 94 and 97. Q102 is subject to Deamidated glutamine. Position 106 is an omega-N-methylarginine; alternate (R106). Symmetric dimethylarginine; alternate is present on R106. S114 bears the Phosphoserine mark. Positions 114-122 (SWGAEGQKP) are induces experimental autoimmune encephalomyelitis (EAE) 2. K121 is modified (N6-acetyllysine). R129 bears the Citrulline mark. The tract at residues 136–167 (GFKGAHDAQGTLSKIFKLGGRDSRSGSPMARR) is disordered. The residue at position 144 (Q144) is a Deamidated glutamine. The residue at position 156 (R156) is a Citrulline. At S158 the chain carries Phosphoserine. S162 carries the post-translational modification Phosphoserine; by UHMK1. Citrulline is present on R167.

Belongs to the myelin basic protein family. In terms of assembly, homodimer. Post-translationally, at least 5 charge isomers; C1 (the most cationic, least modified, and most abundant form), C2, C3, C4 and C5 (the least cationic form); are produced as a result of optional post-translational modifications such as phosphorylation of serine or threonine residues, deamidation of glutamine or asparagine residues, citrullination and methylation of arginine residues. C1 and C2 are unphosphorylated, C3 and C4 are monophosphorylated and C5 is phosphorylated at two positions. Phosphorylated by TAOK2, VRK2, MAPK11, MAPK12, MAPK14 and MINK1. In terms of processing, proteolytically cleaved in B cell lysosomes by cathepsin CTSG which degrades the major immunogenic MBP epitope and prevents the activation of MBP-specific autoreactive T cells. In terms of tissue distribution, found in both the central and the peripheral nervous system.

The protein resides in the myelin membrane. Its function is as follows. Is, with PLP, the most abundant protein component of the myelin membrane in the CNS. Has a role in both the formation and stabilization of this compact multilayer arrangement of bilayers. Each splice variant and charge isomer may have a specialized function in the assembly of an optimized, biochemically functional myelin membrane. The sequence is that of Myelin basic protein (MBP) from Cavia porcellus (Guinea pig).